Consider the following 431-residue polypeptide: MYRFAPSPTGDMHIGNLRAAIFNYICARQKNMDFILRIEDTDKSRNIKGKEEEIKEILNLFGISWQHYYIQSENLKFHRQMALKLVSEKKAFACFCTEEELEAKKELAKKQGKAYRYDGTCEKLADIDVLECEKSFVIRLKKPTHTMKFTDFIKGELSFEPENIDSFVIMRTDKTPTYNFACAVDDMLENVTCIIRGEDHVSNTPKQEHIRASLGYDKAMTYAHLPIILNEEGVKMSKREAHSSVKWLLESGILPSAITNYLIMLGNKTPYEIFTLEEAIKWFDISKVSKAPARFDLKKLLQINREHIKMIKDDELNKILDLNKDLAQLAKFYTQEASTIKELKEKMRAIFNTKDFGEFETECKILKELLKDIELFENYEDFKNKLLNKSSLKGKKFFMPLRIILTGNIHGPELSDLYPYIKNFIHELARI.

A 'HIGH' region motif is present at residues 6–16 (PSPTGDMHIGN). Residues 235 to 239 (KMSKR) carry the 'KMSKS' region motif. Position 238 (lysine 238) interacts with ATP.

It belongs to the class-I aminoacyl-tRNA synthetase family. Glutamate--tRNA ligase type 1 subfamily. Monomer.

The protein resides in the cytoplasm. The enzyme catalyses tRNA(Glu) + L-glutamate + ATP = L-glutamyl-tRNA(Glu) + AMP + diphosphate. In terms of biological role, catalyzes the attachment of glutamate to tRNA(Glu) in a two-step reaction: glutamate is first activated by ATP to form Glu-AMP and then transferred to the acceptor end of tRNA(Glu). This chain is Glutamate--tRNA ligase 2, found in Campylobacter jejuni subsp. doylei (strain ATCC BAA-1458 / RM4099 / 269.97).